Reading from the N-terminus, the 609-residue chain is Isopenicillin N epimerase component 1 (609 aa).

185 to 196 (MLSGSGTTGLPK) is a binding site for AMP. Positions 545-570 (STDNHKHNKVPLRDEGVDPRSMGSKV) are disordered.

This sequence belongs to the ATP-dependent AMP-binding enzyme family.

The catalysed reaction is isopenicillin N = penicillin N. It participates in antibiotic biosynthesis; cephalosporin C biosynthesis. Together with cefD2, catalyzes the reversible isomerization between isopenicillin N and penicillin N. This two-component IPN epimerase system may function by two sequential steps, an activation of isopenicillin N by the acyl-CoA synthase component cefD1, followed by epimerization by the acyl-CoA racemase component cefD2. This chain is Isopenicillin N epimerase component 1 (cefD1), found in Hapsidospora chrysogena (Acremonium chrysogenum).